Consider the following 83-residue polypeptide: Small ribosomal subunit protein bS20 (83 aa).

This sequence belongs to the bacterial ribosomal protein bS20 family.

In terms of biological role, binds directly to 16S ribosomal RNA. In Staphylococcus carnosus (strain TM300), this protein is Small ribosomal subunit protein bS20.